The chain runs to 238 residues: MHFIPKLFPAKLIRRYKRFLADVKQDDQHIFTVSVPNTGSMLGLTASNANIWLSYHENTKRKYAYQLEIVEADNTLVGINTTLPNKLVLEAIQNGLLPELSGYKTILKEQRYGTQSRIDFLLRDDNLPDCYLEVKNVHFIRQKGLAEFPDTETKRGARHLEELMHVVQQGKRAAMLYIIQREDCTAFTICHDLDPLYGRKFDLALKSGVECYAIKCHISVEGIFPIQRVKIENRRNND.

This sequence belongs to the SfsA family.

The protein is Sugar fermentation stimulation protein homolog of Bartonella tribocorum (strain CIP 105476 / IBS 506).